Here is a 236-residue protein sequence, read N- to C-terminus: Large ribosomal subunit protein uL3 (236 aa).

Belongs to the universal ribosomal protein uL3 family. Part of the 50S ribosomal subunit. Forms a cluster with proteins L14 and L19.

One of the primary rRNA binding proteins, it binds directly near the 3'-end of the 23S rRNA, where it nucleates assembly of the 50S subunit. The protein is Large ribosomal subunit protein uL3 of Anaeromyxobacter dehalogenans (strain 2CP-1 / ATCC BAA-258).